Here is a 571-residue protein sequence, read N- to C-terminus: RNA polymerase sigma factor SigA (571 aa).

Residues 321–391 are sigma-70 factor domain-2; sequence MVESNLRLVI…TRAIADQART (71 aa). Residues 345–348 carry the Interaction with polymerase core subunit RpoC motif; the sequence is DLIQ. The segment at 400–476 is sigma-70 factor domain-3; sequence ETINKVLRGA…DTAVESPAEA (77 aa). Residues 489–542 are sigma-70 factor domain-4; it reads VLKTLTDRERFVLIHRFGLLDGRPKTLEEVGSAFNVTRERIRQIEAKALRKMRH. The segment at residues 515–534 is a DNA-binding region (H-T-H motif); that stretch reads LEEVGSAFNVTRERIRQIEA.

Belongs to the sigma-70 factor family. RpoD/SigA subfamily. Interacts transiently with the RNA polymerase catalytic core.

It is found in the cytoplasm. Functionally, sigma factors are initiation factors that promote the attachment of RNA polymerase to specific initiation sites and are then released. This sigma factor is the primary sigma factor during exponential growth. This chain is RNA polymerase sigma factor SigA, found in Chlamydia trachomatis serovar D (strain ATCC VR-885 / DSM 19411 / UW-3/Cx).